The primary structure comprises 551 residues: Glucose-6-phosphate isomerase (551 aa).

Glu-356 serves as the catalytic Proton donor. Residues His-387 and Lys-515 contribute to the active site.

The protein belongs to the GPI family.

It is found in the cytoplasm. The catalysed reaction is alpha-D-glucose 6-phosphate = beta-D-fructose 6-phosphate. It participates in carbohydrate biosynthesis; gluconeogenesis. Its pathway is carbohydrate degradation; glycolysis; D-glyceraldehyde 3-phosphate and glycerone phosphate from D-glucose: step 2/4. Its function is as follows. Catalyzes the reversible isomerization of glucose-6-phosphate to fructose-6-phosphate. This is Glucose-6-phosphate isomerase from Blochmanniella pennsylvanica (strain BPEN).